A 127-amino-acid chain; its full sequence is Holo-[acyl-carrier-protein] synthase (127 aa).

Residues D8 and E56 each contribute to the Mg(2+) site.

Belongs to the P-Pant transferase superfamily. AcpS family. Mg(2+) is required as a cofactor.

The protein resides in the cytoplasm. The catalysed reaction is apo-[ACP] + CoA = holo-[ACP] + adenosine 3',5'-bisphosphate + H(+). Transfers the 4'-phosphopantetheine moiety from coenzyme A to a Ser of acyl-carrier-protein. The protein is Holo-[acyl-carrier-protein] synthase of Caldanaerobacter subterraneus subsp. tengcongensis (strain DSM 15242 / JCM 11007 / NBRC 100824 / MB4) (Thermoanaerobacter tengcongensis).